We begin with the raw amino-acid sequence, 124 residues long: Large ribosomal subunit protein bL19 (124 aa).

It belongs to the bacterial ribosomal protein bL19 family.

Functionally, this protein is located at the 30S-50S ribosomal subunit interface and may play a role in the structure and function of the aminoacyl-tRNA binding site. The protein is Large ribosomal subunit protein bL19 of Zymomonas mobilis subsp. mobilis (strain ATCC 31821 / ZM4 / CP4).